A 344-amino-acid polypeptide reads, in one-letter code: tRNA N6-adenosine threonylcarbamoyltransferase (344 aa).

Fe cation is bound by residues H119 and H123. Substrate-binding positions include 141 to 145, D174, G187, D191, and N280; that span reads VVSGG. D310 contributes to the Fe cation binding site.

This sequence belongs to the KAE1 / TsaD family. Requires Fe(2+) as cofactor.

Its subcellular location is the cytoplasm. The enzyme catalyses L-threonylcarbamoyladenylate + adenosine(37) in tRNA = N(6)-L-threonylcarbamoyladenosine(37) in tRNA + AMP + H(+). Its function is as follows. Required for the formation of a threonylcarbamoyl group on adenosine at position 37 (t(6)A37) in tRNAs that read codons beginning with adenine. Is involved in the transfer of the threonylcarbamoyl moiety of threonylcarbamoyl-AMP (TC-AMP) to the N6 group of A37, together with TsaE and TsaB. TsaD likely plays a direct catalytic role in this reaction. The polypeptide is tRNA N6-adenosine threonylcarbamoyltransferase (Listeria innocua serovar 6a (strain ATCC BAA-680 / CLIP 11262)).